A 381-amino-acid polypeptide reads, in one-letter code: MESIGIVAPQTMHFAEPLRLQSGSVIGNYQLVVETYGELNAARSNAVLVCHALNASHHVAGVYADDPRSTGWWDNMVGPGKPLDTNRFFVIGVNNLGSCFGSTGPMSIDPSTGKPYGAKFPVVTVEDWVHAQARVADAFGIERFAAVMGGSLGGMQALAWSLMYPERVAHCIDIASTPKLSAQNIAFNEVARSAILSDPDFHGGDYYAHGVKPKRGLRVARMIGHITYLSDDDMAEKFGRALRRADGALDAYNFSFDVEFEVESYLRYQGDKFADYFDANTYLLITRALDYFDPAKAFDGNLTAALAHTQAKYLIASFSTDWRFAPARSREIVKALLDNKRTVSYAEIDAPHGHDAFLLDDARYHNLIRAYYERIANEVGA.

Positions 45 to 360 (NAVLVCHALN…PHGHDAFLLD (316 aa)) constitute an AB hydrolase-1 domain. Residue S151 is the Nucleophile of the active site. Position 221 (R221) interacts with substrate. Active-site residues include D321 and H354. A substrate-binding site is contributed by D355.

This sequence belongs to the AB hydrolase superfamily. MetX family. In terms of assembly, homodimer.

It localises to the cytoplasm. It catalyses the reaction L-homoserine + succinyl-CoA = O-succinyl-L-homoserine + CoA. It functions in the pathway amino-acid biosynthesis; L-methionine biosynthesis via de novo pathway; O-succinyl-L-homoserine from L-homoserine: step 1/1. Functionally, transfers a succinyl group from succinyl-CoA to L-homoserine, forming succinyl-L-homoserine. This is Homoserine O-succinyltransferase from Burkholderia cenocepacia (strain ATCC BAA-245 / DSM 16553 / LMG 16656 / NCTC 13227 / J2315 / CF5610) (Burkholderia cepacia (strain J2315)).